We begin with the raw amino-acid sequence, 251 residues long: Hydroxyacylglutathione hydrolase (251 aa).

Positions 53, 55, 57, 58, 110, 127, and 165 each coordinate Zn(2+).

Belongs to the metallo-beta-lactamase superfamily. Glyoxalase II family. As to quaternary structure, monomer. Zn(2+) is required as a cofactor.

It carries out the reaction an S-(2-hydroxyacyl)glutathione + H2O = a 2-hydroxy carboxylate + glutathione + H(+). The protein operates within secondary metabolite metabolism; methylglyoxal degradation; (R)-lactate from methylglyoxal: step 2/2. In terms of biological role, thiolesterase that catalyzes the hydrolysis of S-D-lactoyl-glutathione to form glutathione and D-lactic acid. In Edwardsiella ictaluri (strain 93-146), this protein is Hydroxyacylglutathione hydrolase.